Consider the following 796-residue polypeptide: DnaJ homolog subfamily C member 10 (796 aa).

A signal peptide spans 1-33; it reads MKHSLNTATSSSSVLKRTILYLVLISLAALVYC. The 65-residue stretch at 36–100 folds into the J domain; it reads DYYDLLGVSK…DLRKKYDKYG (65 aa). The region spanning 131–233 is the Thioredoxin 1 domain; the sequence is EIITLDRGEF…ERLVNFAMPY (103 aa). A disulfide bridge connects residues Cys159 and Cys162. 2 trxb regions span residues 236 to 351 and 349 to 464; these read STVT…LPDL and PDLE…PTNF. 3 Thioredoxin domains span residues 455 to 554, 558 to 668, and 672 to 780; these read HVIT…IEDL, SVVT…ALMY, and ASFD…ITKR. The cysteines at positions 481 and 484 are disulfide-linked. Asn531 carries an N-linked (GlcNAc...) asparagine glycan. Intrachain disulfides connect Cys589-Cys592 and Cys701-Cys704. N-linked (GlcNAc...) asparagine glycosylation is present at Asn753. A Prevents secretion from ER motif is present at residues 793 to 796; it reads KDEL.

It localises to the endoplasmic reticulum lumen. Its function is as follows. Endoplasmic reticulum disulfide reductase involved both in the correct folding of proteins and degradation of misfolded proteins. Required for efficient folding of proteins in the endoplasmic reticulum by catalyzing the removal of non-native disulfide bonds formed during the folding of proteins. Also involved in endoplasmic reticulum-associated degradation (ERAD) by reducing incorrect disulfide bonds in misfolded glycoproteins. The polypeptide is DnaJ homolog subfamily C member 10 (dnajc10) (Xenopus laevis (African clawed frog)).